The chain runs to 216 residues: MAAGPRTSVLLAFALLCLPWTQEVGAFPAMPLSSLFANAVLRAQHLHQLAADTYKEFERAYIPEGQRYSIQNTQAAFCFSETIPAPTGKDEAQQRSDVELLRFSLLLIQSWLGPVQFLSRVFTNSLVFGTSDRVYEKLKDLEEGIQALMRELEDGSPRAGQILKQTYDKFDTNMRSDDALLKNYGLLSCFKKDLHKAETYLRVMKCRRFVESSCAF.

A signal peptide spans 1-26; it reads MAAGPRTSVLLAFALLCLPWTQEVGA. A Zn(2+)-binding site is contributed by His-45. Cys-78 and Cys-189 form a disulfide bridge. Ser-131 carries the phosphoserine modification. Residue Glu-198 participates in Zn(2+) binding. Cys-206 and Cys-214 are disulfide-bonded.

Belongs to the somatotropin/prolactin family.

It localises to the secreted. Its function is as follows. Plays an important role in growth control. Its major role in stimulating body growth is to stimulate the liver and other tissues to secrete IGF1. It stimulates both the differentiation and proliferation of myoblasts. It also stimulates amino acid uptake and protein synthesis in muscle and other tissues. The polypeptide is Somatotropin (GH1) (Hippopotamus amphibius (Hippopotamus)).